The chain runs to 547 residues: Cytochrome P450 78A1 (547 aa).

Residues 84-94 (ASSRCPGAAAP) show a composition bias toward low complexity. The disordered stretch occupies residues 84-104 (ASSRCPGAAAPRPRRDGPRRR). Position 490 (cysteine 490) interacts with heme.

It belongs to the cytochrome P450 family. Requires heme as cofactor. In terms of tissue distribution, shoot apex.

The protein is Cytochrome P450 78A1 (CYP78A1) of Zea mays (Maize).